The primary structure comprises 580 residues: Zinc finger protein 271 (580 aa).

C2H2-type zinc fingers lie at residues 78–100 (YNCD…QRTH), 104–126 (YECE…QRIH), 132–154 (YPCS…QRVH), 160–182 (YKCD…QRIH), 188–210 (YQCS…LRIH), 216–238 (YMCN…QRIH), 244–266 (YKCD…QRIH), 272–294 (YPCA…RRIH), 300–322 (YKCS…QRIH), 328–350 (YPCN…QRIH), 356–378 (YPCS…YRIH), 384–406 (YECD…QRIH), 412–434 (YPCN…QRVH), 440–462 (YTCN…QRVH), 468–490 (YHCS…HRVH), 496–518 (YACT…QRIH), 524–545 (YKCM…QRIH), and 551–573 (YPCA…QRVH).

It belongs to the krueppel C2H2-type zinc-finger protein family. In terms of tissue distribution, selectively expressed in adult testis.

The protein resides in the nucleus. In terms of biological role, may act to control gene activity during the pachytene stage of meiotic prophase. May function as a transcription activator. The chain is Zinc finger protein 271 (Znf271) from Mus musculus (Mouse).